Reading from the N-terminus, the 326-residue chain is tRNA-modifying protein YgfZ (326 aa).

Folate is bound by residues tryptophan 27 and tryptophan 189.

Belongs to the tRNA-modifying YgfZ family.

It is found in the cytoplasm. Folate-binding protein involved in regulating the level of ATP-DnaA and in the modification of some tRNAs. It is probably a key factor in regulatory networks that act via tRNA modification, such as initiation of chromosomal replication. The protein is tRNA-modifying protein YgfZ of Salmonella paratyphi C (strain RKS4594).